A 509-amino-acid polypeptide reads, in one-letter code: MEEIQRYLQLERSQQHDFLYPLIFQEYIYTFAHDRGFSRSILSENPGYDNKSSLLIVKRLITRMYQQNHFIISPNDSNQNPFWARNKNLYSQIISEGFAFIVEIPFSIRLISCLEGKKIVKSQNLRSIHSIFPFLEDNFSHLNFVLDILIPHSVHVEILVQTLRYWVKDASSLHLLRFFLNEYCNWNSLITPKKASSSFSKRNQRLFLFLYNSHVCEYESIFVFLRNQSSHLRSTSSGVLLERIYFYRKIERLVNVFVKVKDFQANLWFVKEPCMHYIRYQRKSILASKGTSLFMNKWKCYFVTFWQWHFSLWFHPSRIYINQLSNHSLEFLGYLSSVRINPSVVRSQILENAFLINNAIKKFDTLVPIIPLIASLAKAKFCNVLGHPVSKPGRADLSDSNIIDRFGCICRNLSHYHSGSSKKKSLYRIKYILRLSCARTLARKHKSTVRAFLKRLGSEFLEQFLMSEEDVLFLTFQKASSTLRGVYRSRIWYLDIISINDLANHKSKF.

This sequence belongs to the intron maturase 2 family. MatK subfamily.

The protein localises to the plastid. It localises to the chloroplast. Usually encoded in the trnK tRNA gene intron. Probably assists in splicing its own and other chloroplast group II introns. In Ibicella lutea (Yellow unicorn-plant), this protein is Maturase K.